A 487-amino-acid chain; its full sequence is ATP synthase subunit beta (487 aa).

An ATP-binding site is contributed by 164 to 171 (GGAGVGKT).

The protein belongs to the ATPase alpha/beta chains family. As to quaternary structure, F-type ATPases have 2 components, CF(1) - the catalytic core - and CF(0) - the membrane proton channel. CF(1) has five subunits: alpha(3), beta(3), gamma(1), delta(1), epsilon(1). CF(0) has four main subunits: a(1), b(1), b'(1) and c(9-12).

The protein resides in the cellular thylakoid membrane. The enzyme catalyses ATP + H2O + 4 H(+)(in) = ADP + phosphate + 5 H(+)(out). In terms of biological role, produces ATP from ADP in the presence of a proton gradient across the membrane. The catalytic sites are hosted primarily by the beta subunits. The sequence is that of ATP synthase subunit beta from Synechococcus sp. (strain CC9605).